Here is a 964-residue protein sequence, read N- to C-terminus: uncharacterized protein (964 aa).

The span at aspartate 97–aspartate 117 shows a compositional bias: acidic residues. Residues aspartate 97 to serine 208 form a disordered region. The segment covering histidine 121–aspartate 148 has biased composition (low complexity). The segment covering asparagine 149–serine 163 has biased composition (acidic residues). Residues asparagine 192 to aspartate 203 are compositionally biased toward low complexity.

This is an uncharacterized protein from Acanthamoeba polyphaga (Amoeba).